Consider the following 145-residue polypeptide: Basic phospholipase A2 beta-bungarotoxin A2 chain (145 aa).

The signal sequence occupies residues 1-17 (MLIFLWCGAVCVSLLGA). The propeptide occupies 18-25 (ANIPPHPL). 6 disulfides stabilise this stretch: C52–C144, C54–C70, C69–C125, C76–C118, C86–C111, and C104–C116. Residues Y53, G55, and G57 each coordinate Ca(2+). H73 is an active-site residue. D74 is a binding site for Ca(2+). Residue D119 is part of the active site.

Belongs to the phospholipase A2 family. Group I subfamily. D49 sub-subfamily. Heterodimer; disulfide-linked. The A chains have phospholipase A2 activity and the B chains show homology with the basic protease inhibitors. The A2 chain is found in beta-3 and beta-4 bungarotoxins. It depends on Ca(2+) as a cofactor. Expressed by the venom gland.

It is found in the secreted. The catalysed reaction is a 1,2-diacyl-sn-glycero-3-phosphocholine + H2O = a 1-acyl-sn-glycero-3-phosphocholine + a fatty acid + H(+). Functionally, snake venom phospholipase A2 (PLA2) that inhibits neuromuscular transmission by blocking acetylcholine release from the nerve termini. PLA2 catalyzes the calcium-dependent hydrolysis of the 2-acyl groups in 3-sn-phosphoglycerides. This chain is Basic phospholipase A2 beta-bungarotoxin A2 chain, found in Bungarus multicinctus (Many-banded krait).